Reading from the N-terminus, the 456-residue chain is Equilibrative nucleoside transporter 2 (456 aa).

A helical transmembrane segment spans residues 13-33; it reads LVGISFFILGLGTLLPWNFFI. N-linked (GlcNAc...) asparagine glycosylation occurs at asparagine 56. Helical transmembrane passes span 69 to 89, 98 to 118, 123 to 143, 161 to 181, and 192 to 212; these read WVTL…SFLY, ILGS…LVKV, GLFF…CAVL, LFLS…LMSL, and LGYF…YLSL. Residues 248–277 are disordered; it reads GVPISPQQASPTLDLDPEKEPEPEEPQKPG. Serine 252 bears the Phosphoserine mark. Positions 263–275 are enriched in basic and acidic residues; the sequence is DPEKEPEPEEPQK. The next 5 helical transmembrane spans lie at 288-308, 323-343, 360-380, 396-416, and 432-452; these read IWLT…VFPA, WGLF…DWLG, LLPL…LCHV, FITF…LTMC, and ALMT…SFLF.

Belongs to the SLC29A/ENT transporter (TC 2.A.57) family.

The protein localises to the apical cell membrane. The protein resides in the basolateral cell membrane. Its subcellular location is the nucleus membrane. It carries out the reaction inosine(in) = inosine(out). The catalysed reaction is adenosine(in) = adenosine(out). It catalyses the reaction uridine(out) = uridine(in). The enzyme catalyses thymidine(in) = thymidine(out). It carries out the reaction hypoxanthine(out) = hypoxanthine(in). The catalysed reaction is adenine(out) = adenine(in). It catalyses the reaction cytidine(in) = cytidine(out). The enzyme catalyses thymine(out) = thymine(in). It carries out the reaction uracil(in) = uracil(out). The catalysed reaction is guanine(out) = guanine(in). It catalyses the reaction guanosine(in) = guanosine(out). Bidirectional uniporter involved in the facilitative transport of nucleosides and nucleobases, and contributes to maintaining their cellular homeostasis. Functions as a Na(+)-independent, passive transporter. Involved in the transport of nucleosides such as inosine, adenosine, uridine, thymidine, cytidine and guanosine. Also able to transport purine nucleobases (hypoxanthine, adenine, guanine) and pyrimidine nucleobases (thymine, uracil). Involved in nucleoside transport at basolateral membrane of kidney cells, allowing liver absorption of nucleoside metabolites. Mediates apical nucleoside uptake into Sertoli cells, thereby regulating the transport of nucleosides in testis across the blood-testis-barrier. Mediates both the influx and efflux of hypoxanthine in skeletal muscle microvascular endothelial cells to control the amount of intracellular hypoxanthine available for xanthine oxidase-mediated ROS production. In Mus musculus (Mouse), this protein is Equilibrative nucleoside transporter 2.